The chain runs to 277 residues: Pantothenate synthetase (277 aa).

28 to 35 is an ATP binding site; sequence MGALHSGH. H35 serves as the catalytic Proton donor. Q59 contacts (R)-pantoate. Q59 provides a ligand contact to beta-alanine. Residues 145–148, V174, and 182–185 each bind ATP; these read GEKD and LSSR.

This sequence belongs to the pantothenate synthetase family. As to quaternary structure, homodimer.

The protein resides in the cytoplasm. The catalysed reaction is (R)-pantoate + beta-alanine + ATP = (R)-pantothenate + AMP + diphosphate + H(+). It functions in the pathway cofactor biosynthesis; (R)-pantothenate biosynthesis; (R)-pantothenate from (R)-pantoate and beta-alanine: step 1/1. Functionally, catalyzes the condensation of pantoate with beta-alanine in an ATP-dependent reaction via a pantoyl-adenylate intermediate. This Anaplasma marginale (strain St. Maries) protein is Pantothenate synthetase.